The chain runs to 496 residues: uncharacterized protein (496 aa).

Residues aspartate 36, aspartate 81, glutamate 300, glutamate 302, aspartate 321, aspartate 323, and aspartate 375 each coordinate Mg(2+).

Belongs to the XPG/RAD2 endonuclease family. FEN1 subfamily. The cofactor is Mg(2+).

This is an uncharacterized protein from Schizosaccharomyces pombe (strain 972 / ATCC 24843) (Fission yeast).